The sequence spans 286 residues: Bifunctional protein FolD (286 aa).

NADP(+)-binding positions include 165-167 (GRS) and serine 190.

It belongs to the tetrahydrofolate dehydrogenase/cyclohydrolase family. In terms of assembly, homodimer.

It carries out the reaction (6R)-5,10-methylene-5,6,7,8-tetrahydrofolate + NADP(+) = (6R)-5,10-methenyltetrahydrofolate + NADPH. It catalyses the reaction (6R)-5,10-methenyltetrahydrofolate + H2O = (6R)-10-formyltetrahydrofolate + H(+). It participates in one-carbon metabolism; tetrahydrofolate interconversion. Its function is as follows. Catalyzes the oxidation of 5,10-methylenetetrahydrofolate to 5,10-methenyltetrahydrofolate and then the hydrolysis of 5,10-methenyltetrahydrofolate to 10-formyltetrahydrofolate. This is Bifunctional protein FolD from Burkholderia cenocepacia (strain ATCC BAA-245 / DSM 16553 / LMG 16656 / NCTC 13227 / J2315 / CF5610) (Burkholderia cepacia (strain J2315)).